Consider the following 2615-residue polypeptide: Polycystin-1-like protein 1 (2615 aa).

The Extracellular portion of the chain corresponds to 1–1524 (MDVDEDQHAV…VSSISEFQSH (1524 aa)). Residues 17–93 (IQANPELCVS…GTNSFSNPPP (77 aa)) are disordered. N-linked (GlcNAc...) asparagine glycosylation is found at asparagine 224, asparagine 297, asparagine 306, asparagine 390, asparagine 440, asparagine 534, and asparagine 619. 2 consecutive PKD domains span residues 291 to 373 (SVSV…VQKR) and 375 to 456 (MANR…VREP). An REJ domain is found at 457–1349 (CQPPPVKNMG…GEEDYLHKRN (893 aa)). Positions 749–815 (SSKSDLPSNL…GEPMEEYSSL (67 aa)) are disordered. Over residues 778-789 (ALSNLGSISAES) the composition is skewed to polar residues. A GAIN-B domain is found at 1364-1512 (RFTGLSENSQ…SVLRRKLNAT (149 aa)). An N-linked (GlcNAc...) asparagine glycan is attached at asparagine 1458. A disulfide bridge links cysteine 1468 with cysteine 1494. Positions 1468–1512 (CVFWDKTEWRSEGPYPQPGSSPEKVNCSYHHLAPVSVLRRKLNAT) are GPS. The N-linked (GlcNAc...) asparagine glycan is linked to asparagine 1510. The chain crosses the membrane as a helical span at residues 1525 to 1545 (PHNLLPGIFSAFLLVLYGILV). Residues 1546–1732 (SKSRYVDCHE…PPSRSYLHTQ (187 aa)) lie on the Cytoplasmic side of the membrane. Residues 1573–1690 (QLYAVVIDTG…LGGHVLREFF (118 aa)) form the PLAT domain. The chain crosses the membrane as a helical span at residues 1733–1753 (RLAVSFCLLCVYSCLTALVTV). Topologically, residues 1754–1772 (RDHQQRPLDVGPTAITLEP) are extracellular. The chain crosses the membrane as a helical span at residues 1773–1793 (FCMALLCTLLACPVAQLLSLL). The Cytoplasmic segment spans residues 1794–1905 (FRCSKEARGD…ELGSQKSRVC (112 aa)). The disordered stretch occupies residues 1807-1840 (STQWPLRGVKTETPQGHDSSGRPDSRQPSPHPTS). A helical transmembrane segment spans residues 1906–1926 (LLWSSSVAWAISGSASLACGL). The Extracellular portion of the chain corresponds to 1927–1950 (GTGFLGYWFVPAQCMWWLYLLLLS). The chain crosses the membrane as a helical span at residues 1951-1971 (LVCCAFITQPLMICLAALVFA). Residues 1972-2057 (WKRKHDSKFF…ERLRRESIMQ (86 aa)) lie on the Cytoplasmic side of the membrane. The chain crosses the membrane as a helical span at residues 2058-2078 (AALRDMTTHSIMLLLLLFIAY). Residues 2079–2288 (GRFCPGEISL…IFYSDSALKY (210 aa)) lie on the Extracellular side of the membrane. The chain crosses the membrane as a helical span at residues 2289-2309 (LLMLSELLFLVLNVIHLCFQL). The Cytoplasmic segment spans residues 2310 to 2332 (WGMTTKGILSYWRKPRHWLELSM). The chain crosses the membrane as a helical span at residues 2333-2353 (VGVAIAYYAASGHLTTLAVNI). Over 2354 to 2379 (TDQFHKGLYQRLVDIGLMVSWHQRAR) the chain is Extracellular. A helical membrane pass occupies residues 2380-2400 (CLQGILLFLWMLKYVHLLSSL). The Cytoplasmic segment spans residues 2401-2405 (STMTP). The chain crosses the membrane as a helical span at residues 2406–2426 (FSAVTCFPLFRVLLVGALLLA). Residues 2427-2483 (AHYHSRWFLLFTGTLSHGTSAEAFPGLLLQFPGRSKKDSWHNCLKSDHGVMRCYYGT) are Extracellular-facing. Residues 2484–2504 (LFLLLATLGFRMLRATFLTVF) traverse the membrane as a helical segment. Topologically, residues 2505-2615 (QNRKSSHRKP…VSGPLAAESE (111 aa)) are cytoplasmic. The disordered stretch occupies residues 2589-2615 (RAGDSPPVGSSEYQATGVSGPLAAESE).

This sequence belongs to the polycystin family. As to quaternary structure, heterodimer. Interacts with PKD2 to form a calcium channel. Interacts with PKD2L1; to form ciliary calcium channel. May interact with GNA12, GNAS, GNAI1 and GNAI2. In terms of tissue distribution, in testis, strong expression in Leydig cells, low level in seminal ducts, myoid cells and tunica vaginalis. Other tissues, including adrenal gland and heart myocardium, also show low expression. In embryo, highly expressed in the node.

The protein localises to the cell projection. It is found in the cilium membrane. Component of a calcium-permeant ion channel formed by PKD1L2 and PKD1L1 in primary cilia, where it controls cilium calcium concentration, without affecting cytoplasmic calcium concentration, and regulates sonic hedgehog/SHH signaling and GLI2 transcription. The PKD1L1:PKD2L1 channel complex is mechanosensitive only at high pressures and is highly temperature sensitive. Also involved in left/right axis specification downstream of nodal flow by forming a complex with PKD2 in cilia to facilitate flow detection in left/right patterning. May function as a G-protein-coupled receptor. This Mus musculus (Mouse) protein is Polycystin-1-like protein 1.